The primary structure comprises 332 residues: MGSGYQLLQLPRERFRKTSFLVWVIILFQRAISMPLGIVTNSTLKATEIDQLVCRDKLSSTSQLKSVGLNLEGNGIATDVPSATKRWGFRSGVPPKVVSYEAGEWAENCYNLEIKKSDGSECLPLPPDGVRGFPRCRYVHKVQGTGPCPGDLAFHKNGAFFLYDRLASTVIYRGTTFAEGVIAFLILSEPKKHFWKATPAHEPVNTTDDSTSYYMTLTLSYEMSNFGGEESNTLFKVDNHTYVQLDRPHTPQFLVQLNETLRRNNRLSNSTGRLTWTVDPKIEPDVGEWAFWETKKKLFPTTSWRKLAFPNSINPHQQLLRSEPGGNCPRKN.

A signal peptide spans 1–33 (MGSGYQLLQLPRERFRKTSFLVWVIILFQRAIS). Asn41 carries an N-linked (GlcNAc...) asparagine; by host glycan. 2 disulfide bridges follow: Cys109–Cys136 and Cys122–Cys148. Residues Asn205, Asn239, Asn258, and Asn269 are each glycosylated (N-linked (GlcNAc...) asparagine; by host).

It belongs to the filoviruses glycoprotein family.

It localises to the secreted. The sequence is that of Super small secreted glycoprotein (GP) from Homo sapiens (Human).